The primary structure comprises 428 residues: Glutamate-1-semialdehyde 2,1-aminomutase (428 aa).

Lys-265 carries the N6-(pyridoxal phosphate)lysine modification.

This sequence belongs to the class-III pyridoxal-phosphate-dependent aminotransferase family. HemL subfamily. In terms of assembly, homodimer. The cofactor is pyridoxal 5'-phosphate.

The protein localises to the cytoplasm. It catalyses the reaction (S)-4-amino-5-oxopentanoate = 5-aminolevulinate. Its pathway is porphyrin-containing compound metabolism; protoporphyrin-IX biosynthesis; 5-aminolevulinate from L-glutamyl-tRNA(Glu): step 2/2. This chain is Glutamate-1-semialdehyde 2,1-aminomutase, found in Vesicomyosocius okutanii subsp. Calyptogena okutanii (strain HA).